A 183-amino-acid polypeptide reads, in one-letter code: Ribosome rescue factor SmrB (183 aa).

Residues 98–173 (LDLHGLTQLQ…GDAALLVLIE (76 aa)) form the Smr domain.

This sequence belongs to the SmrB family. Associates with collided ribosomes, but not with correctly translating polysomes.

Its function is as follows. Acts as a ribosome collision sensor. Detects stalled/collided disomes (pairs of ribosomes where the leading ribosome is stalled and a second ribosome has collided with it) and endonucleolytically cleaves mRNA at the 5' boundary of the stalled ribosome. Stalled/collided disomes form a new interface (primarily via the 30S subunits) that binds SmrB. Cleaved mRNA becomes available for tmRNA ligation, leading to ribosomal subunit dissociation and rescue of stalled ribosomes. The sequence is that of Ribosome rescue factor SmrB from Escherichia fergusonii (strain ATCC 35469 / DSM 13698 / CCUG 18766 / IAM 14443 / JCM 21226 / LMG 7866 / NBRC 102419 / NCTC 12128 / CDC 0568-73).